The following is a 218-amino-acid chain: N-(5'-phosphoribosyl)anthranilate isomerase (218 aa).

It belongs to the TrpF family.

It catalyses the reaction N-(5-phospho-beta-D-ribosyl)anthranilate = 1-(2-carboxyphenylamino)-1-deoxy-D-ribulose 5-phosphate. It participates in amino-acid biosynthesis; L-tryptophan biosynthesis; L-tryptophan from chorismate: step 3/5. The sequence is that of N-(5'-phosphoribosyl)anthranilate isomerase from Bordetella pertussis (strain Tohama I / ATCC BAA-589 / NCTC 13251).